The chain runs to 181 residues: Shikimate kinase 2 (181 aa).

Residue 12–17 participates in ATP binding; it reads GCGKTT. T16 and D32 together coordinate Mg(2+). D34, R58, and G79 together coordinate substrate. An LID domain region spans residues 112 to 126; the sequence is EAEPEAELRPTLTGK. R120 is an ATP binding site. R139 is a substrate binding site.

This sequence belongs to the shikimate kinase family. AroL subfamily. As to quaternary structure, monomer. It depends on Mg(2+) as a cofactor.

Its subcellular location is the cytoplasm. The catalysed reaction is shikimate + ATP = 3-phosphoshikimate + ADP + H(+). Its pathway is metabolic intermediate biosynthesis; chorismate biosynthesis; chorismate from D-erythrose 4-phosphate and phosphoenolpyruvate: step 5/7. Catalyzes the specific phosphorylation of the 3-hydroxyl group of shikimic acid using ATP as a cosubstrate. In Salmonella schwarzengrund (strain CVM19633), this protein is Shikimate kinase 2.